Consider the following 624-residue polypeptide: Chaperone protein HtpG (624 aa).

The interval 1 to 336 is a; substrate-binding; sequence MKGQETRGFQ…SSDLPLNVSR (336 aa). Residues 337–552 form a b region; the sequence is EILQDSTVTR…ADEMSTQMAK (216 aa). Positions 553 to 624 are c; it reads LFAAAGQKVP…IRRMNQLLVS (72 aa).

The protein belongs to the heat shock protein 90 family. As to quaternary structure, homodimer.

It is found in the cytoplasm. In terms of biological role, molecular chaperone. Has ATPase activity. The sequence is that of Chaperone protein HtpG from Escherichia coli O1:K1 / APEC.